Reading from the N-terminus, the 405-residue chain is MQIPEKYLSSVDNVEEETQILFALSKQKDADLGMLDSKQEQIALTIGNKPIKVKQSLQSLHQSRGSTGSVLWKTSVKVVPWLLQQSWFMNSLTPKTSILELGSGISGLAGILLSPFVGNYVASDKQLYLKKIRENLDQNNASDVEVHELDWKSTPYPKDWTFDFLDYVLFFDCIYNPHLNAHLVSCLASLAERYPGMQCLFAQELRDQETLVDFLERVRPYFEVDLIKMEEINKTSVASSTNLPPANMSLFIMKPYNHEEYMLKALNEAKKCEPTDSAFCVGAVIVQNGKIVSTGYSRERPGNTHAEECAIEKFMLKNPTDSLEGAIMYSTMEPCSKRLSKKVSCTDLIVKQKFSTVVLGSLEPDIFVKCEGVDLLKKAGIVVIEKLTFQDDCLREAVRGHPPKH.

The 128-residue stretch at 256–383 folds into the CMP/dCMP-type deaminase domain; that stretch reads YNHEEYMLKA…DLLKKAGIVV (128 aa). His305 contributes to the Zn(2+) binding site. The active-site Proton donor is the Glu307. Zn(2+) contacts are provided by Cys335 and Cys345.

It belongs to the cytidine and deoxycytidylate deaminase family. It depends on Zn(2+) as a cofactor.

Its subcellular location is the cytoplasm. It is found in the nucleus. It carries out the reaction 2,5-diamino-6-hydroxy-4-(5-phosphoribosylamino)-pyrimidine + H2O + H(+) = 5-amino-6-(5-phospho-D-ribosylamino)uracil + NH4(+). It participates in cofactor biosynthesis; riboflavin biosynthesis; 5-amino-6-(D-ribitylamino)uracil from GTP: step 2/4. Functionally, involved in riboflavin biosynthesis. Converts 2,5-diamino-6-(ribosylamino)-4(3H)-pyrimidinone 5'-phosphate into 5-amino-6-(ribosylamino)-2,4(1H,3H)-pyrimidinedione 5'-phosphate. The sequence is that of Diaminohydroxyphosphoribosylamino-pyrimidine deaminase from Schizosaccharomyces pombe (strain 972 / ATCC 24843) (Fission yeast).